The chain runs to 251 residues: tRNA (guanine-N(1)-)-methyltransferase (251 aa).

S-adenosyl-L-methionine contacts are provided by residues G113 and 133–138 (IGDYVL).

Belongs to the RNA methyltransferase TrmD family. In terms of assembly, homodimer.

Its subcellular location is the cytoplasm. The enzyme catalyses guanosine(37) in tRNA + S-adenosyl-L-methionine = N(1)-methylguanosine(37) in tRNA + S-adenosyl-L-homocysteine + H(+). Functionally, specifically methylates guanosine-37 in various tRNAs. The polypeptide is tRNA (guanine-N(1)-)-methyltransferase (Pectobacterium atrosepticum (strain SCRI 1043 / ATCC BAA-672) (Erwinia carotovora subsp. atroseptica)).